Reading from the N-terminus, the 344-residue chain is AP2/ERF and B3 domain-containing transcription factor RAV1 (344 aa).

Residues 1 to 15 show a composition bias toward low complexity; it reads MESSSVDESTTSTGS. Residues 1–22 form a disordered region; sequence MESSSVDESTTSTGSICETPAI. Positions 61–116 form a DNA-binding region, AP2/ERF; sequence KYKGVVPQPNGRWGAQIYEKHQRVWLGTFNEEDEAARAYDVAVHRFRRRDAVTNFK. Residues 148 to 169 form a disordered region; sequence ELEQSKRRRNGNGNMTRTLLTS. The TF-B3 DNA-binding region spans 188 to 292; sequence FEKAVTPSDV…QLYIGWKSRS (105 aa).

Belongs to the AP2/ERF transcription factor family. RAV subfamily. As to quaternary structure, monomer. As to expression, expressed in all tissues examined: Roots, rosette leaves, cauline leaves, inflorescence stems, flowers and siliques. Highest expression in roots and rosette leaves. Very low expression in flowers.

The protein resides in the nucleus. Functionally, binds specifically to bipartite recognition sequences composed of two unrelated motifs, 5'-CAACA-3' and 5'-CACCTG-3'. May function as negative regulator of plant growth and development. The polypeptide is AP2/ERF and B3 domain-containing transcription factor RAV1 (RAV1) (Arabidopsis thaliana (Mouse-ear cress)).